The sequence spans 165 residues: Methylated-DNA--protein-cysteine methyltransferase (165 aa).

Cys126 (nucleophile; methyl group acceptor) is an active-site residue.

Belongs to the MGMT family.

It localises to the cytoplasm. It catalyses the reaction a 6-O-methyl-2'-deoxyguanosine in DNA + L-cysteinyl-[protein] = S-methyl-L-cysteinyl-[protein] + a 2'-deoxyguanosine in DNA. The catalysed reaction is a 4-O-methyl-thymidine in DNA + L-cysteinyl-[protein] = a thymidine in DNA + S-methyl-L-cysteinyl-[protein]. Involved in the cellular defense against the biological effects of O6-methylguanine (O6-MeG) and O4-methylthymine (O4-MeT) in DNA. Repairs the methylated nucleobase in DNA by stoichiometrically transferring the methyl group to a cysteine residue in the enzyme. This is a suicide reaction: the enzyme is irreversibly inactivated. The sequence is that of Methylated-DNA--protein-cysteine methyltransferase from Mycobacterium bovis (strain ATCC BAA-935 / AF2122/97).